An 89-amino-acid polypeptide reads, in one-letter code: Elongation factor 1-beta (89 aa).

This sequence belongs to the EF-1-beta/EF-1-delta family.

In terms of biological role, promotes the exchange of GDP for GTP in EF-1-alpha/GDP, thus allowing the regeneration of EF-1-alpha/GTP that could then be used to form the ternary complex EF-1-alpha/GTP/AAtRNA. The sequence is that of Elongation factor 1-beta from Methanococcus maripaludis (strain C7 / ATCC BAA-1331).